We begin with the raw amino-acid sequence, 444 residues long: Structure-specific endonuclease subunit SLX1 (444 aa).

In terms of domain architecture, GIY-YIG spans 23 to 105; it reads AFYCCYLLRS…QNTKVSRHAD (83 aa). An SLX1-type zinc finger spans residues 240 to 295; the sequence is CGVCKQRLILQHDIIAVCSHSSCHCAAHLSCLSSHFLKDKDSDSELIPREGTCPAC. Disordered regions lie at residues 323 to 355 and 386 to 444; these read RRRR…DALQ and AHRP…EVIE.

It belongs to the SLX1 family. Forms a heterodimer with SLX4. A divalent metal cation is required as a cofactor.

The protein resides in the nucleus. Its function is as follows. Catalytic subunit of the SLX1-SLX4 structure-specific endonuclease that resolves DNA secondary structures generated during DNA repair and recombination. Has endonuclease activity towards branched DNA substrates, introducing single-strand cuts in duplex DNA close to junctions with ss-DNA. In Paracoccidioides brasiliensis (strain Pb18), this protein is Structure-specific endonuclease subunit SLX1.